The following is an 80-amino-acid chain: Antitoxin VapB15 (80 aa).

Positions 60–80 are disordered; it reads DFSNDEIESFSDTDRKLADES. Glutamate 67 serves as a coordination point for Mg(2+). Glutamate 67 is a binding site for Mn(2+). Over residues 71-80 the composition is skewed to basic and acidic residues; that stretch reads DTDRKLADES.

As to quaternary structure, forms a VapB15-VapC15(2) heterotrimer and a VapB15(2)-VapC15(2) heterotetramer; each toxin pair forms a homodimer which creates a channel in which the antitoxin binds. Requires Mg(2+) as cofactor. Mn(2+) serves as cofactor.

Functionally, antitoxin component of a type II toxin-antitoxin (TA) system. Neutralizes the toxic effect of cognate toxin VapC15. This Mycobacterium tuberculosis (strain CDC 1551 / Oshkosh) protein is Antitoxin VapB15 (vapB15).